Here is a 733-residue protein sequence, read N- to C-terminus: Polyribonucleotide nucleotidyltransferase (733 aa).

Residues Asp-503 and Asp-509 each contribute to the Mg(2+) site. The region spanning 570–629 is the KH domain; sequence PRLTTIQIPVDAIGMVIGKGGETIRSITEETGAEINIDDDGTVTIACSSPEATKAAVETI. Positions 639–713 constitute an S1 motif domain; sequence GTIYMGKVRD…GKTKFALSIK (75 aa).

This sequence belongs to the polyribonucleotide nucleotidyltransferase family. Mg(2+) is required as a cofactor.

It localises to the cytoplasm. The catalysed reaction is RNA(n+1) + phosphate = RNA(n) + a ribonucleoside 5'-diphosphate. Involved in mRNA degradation. Catalyzes the phosphorolysis of single-stranded polyribonucleotides processively in the 3'- to 5'-direction. The sequence is that of Polyribonucleotide nucleotidyltransferase from Chlorobaculum tepidum (strain ATCC 49652 / DSM 12025 / NBRC 103806 / TLS) (Chlorobium tepidum).